The sequence spans 123 residues: Small ribosomal subunit protein uS12 (123 aa).

The interval 1–28 (MPTIQQLIRKPRQPKVKRSKSQHLEQCP) is disordered. Basic residues predominate over residues 9-21 (RKPRQPKVKRSKS). 3-methylthioaspartic acid is present on Asp89.

Belongs to the universal ribosomal protein uS12 family. In terms of assembly, part of the 30S ribosomal subunit. Contacts proteins S8 and S17. May interact with IF1 in the 30S initiation complex.

Its function is as follows. With S4 and S5 plays an important role in translational accuracy. Functionally, interacts with and stabilizes bases of the 16S rRNA that are involved in tRNA selection in the A site and with the mRNA backbone. Located at the interface of the 30S and 50S subunits, it traverses the body of the 30S subunit contacting proteins on the other side and probably holding the rRNA structure together. The combined cluster of proteins S8, S12 and S17 appears to hold together the shoulder and platform of the 30S subunit. This is Small ribosomal subunit protein uS12 from Ruegeria pomeroyi (strain ATCC 700808 / DSM 15171 / DSS-3) (Silicibacter pomeroyi).